The chain runs to 243 residues: MSETHFGFEKVDETEKAGKVAGVFHSVASKYDVMNDLMSGGMHRLWKMFTIAQAGVRPGHKVLDIAGGTGDLAKAFAKQAGPTGQVWLTDINESMLRVGRDRLLNKGIVTPVALCDAEKIPFPDNYFDLVTVAFGLRNMTHKEAALAEMRRVVKPGGKVMVLEFSKVWKPLEKAYDVYSFKVLPWLGQRVAGDAPSYRYLAESIRMHPDQVSLVRLMEHAGLENVEYFNLTAGVVALHVGRKY.

Residues Thr69, Asp90, and 116 to 117 (DA) contribute to the S-adenosyl-L-methionine site.

Belongs to the class I-like SAM-binding methyltransferase superfamily. MenG/UbiE family.

It carries out the reaction a 2-demethylmenaquinol + S-adenosyl-L-methionine = a menaquinol + S-adenosyl-L-homocysteine + H(+). The catalysed reaction is a 2-methoxy-6-(all-trans-polyprenyl)benzene-1,4-diol + S-adenosyl-L-methionine = a 5-methoxy-2-methyl-3-(all-trans-polyprenyl)benzene-1,4-diol + S-adenosyl-L-homocysteine + H(+). Its pathway is quinol/quinone metabolism; menaquinone biosynthesis; menaquinol from 1,4-dihydroxy-2-naphthoate: step 2/2. The protein operates within cofactor biosynthesis; ubiquinone biosynthesis. In terms of biological role, methyltransferase required for the conversion of demethylmenaquinol (DMKH2) to menaquinol (MKH2) and the conversion of 2-polyprenyl-6-methoxy-1,4-benzoquinol (DDMQH2) to 2-polyprenyl-3-methyl-6-methoxy-1,4-benzoquinol (DMQH2). The sequence is that of Ubiquinone/menaquinone biosynthesis C-methyltransferase UbiE from Cupriavidus taiwanensis (strain DSM 17343 / BCRC 17206 / CCUG 44338 / CIP 107171 / LMG 19424 / R1) (Ralstonia taiwanensis (strain LMG 19424)).